We begin with the raw amino-acid sequence, 90 residues long: Large ribosomal subunit protein bL27 (90 aa).

The tract at residues 1–21 (MAHKKAGGSSRNGRDSQAKRL) is disordered.

This sequence belongs to the bacterial ribosomal protein bL27 family.

This is Large ribosomal subunit protein bL27 from Laribacter hongkongensis (strain HLHK9).